We begin with the raw amino-acid sequence, 162 residues long: CASP-like protein 1C1 (162 aa).

Over 1-7 (MFSAKAR) the chain is Cytoplasmic. A helical membrane pass occupies residues 8–28 (WIVAVVLRVAAAGAAAVAAVL). Over 29-52 (MAMSHDEVIVYGMEVQAKFRYTPS) the chain is Extracellular. Residues 53–73 (LVFFVAANAAVSACSLVVLLV) traverse the membrane as a helical segment. Residues 74-83 (PSSTSKLAAR) are Cytoplasmic-facing. A helical transmembrane segment spans residues 84–104 (LLLMADVVLGMVLAGAFAAAG). Topologically, residues 105-135 (AMAELGKNGNSHAGWIAICVQVPLFCDRVRS) are extracellular. Residues 136 to 156 (ALVAGSATIVLYYLMLMYSIY) traverse the membrane as a helical segment. Over 157 to 162 (TLPMFP) the chain is Cytoplasmic.

It belongs to the Casparian strip membrane proteins (CASP) family. As to quaternary structure, homodimer and heterodimers.

It localises to the cell membrane. The polypeptide is CASP-like protein 1C1 (Oryza sativa subsp. japonica (Rice)).